A 744-amino-acid polypeptide reads, in one-letter code: Phosphoribosylformylglycinamidine synthase subunit PurL (744 aa).

Residue histidine 49 is part of the active site. ATP contacts are provided by tyrosine 52 and lysine 91. Glutamate 93 contacts Mg(2+). Substrate-binding positions include 94–97 and arginine 116; that span reads SHNH. Catalysis depends on histidine 95, which acts as the Proton acceptor. Position 117 (aspartate 117) interacts with Mg(2+). Glutamine 240 is a binding site for substrate. Aspartate 268 contributes to the Mg(2+) binding site. Position 312–314 (312–314) interacts with substrate; the sequence is ESQ. ATP-binding residues include aspartate 493 and glycine 530. Asparagine 531 is a Mg(2+) binding site. Residue serine 533 coordinates substrate.

This sequence belongs to the FGAMS family. As to quaternary structure, monomer. Part of the FGAM synthase complex composed of 1 PurL, 1 PurQ and 2 PurS subunits.

It is found in the cytoplasm. It catalyses the reaction N(2)-formyl-N(1)-(5-phospho-beta-D-ribosyl)glycinamide + L-glutamine + ATP + H2O = 2-formamido-N(1)-(5-O-phospho-beta-D-ribosyl)acetamidine + L-glutamate + ADP + phosphate + H(+). Its pathway is purine metabolism; IMP biosynthesis via de novo pathway; 5-amino-1-(5-phospho-D-ribosyl)imidazole from N(2)-formyl-N(1)-(5-phospho-D-ribosyl)glycinamide: step 1/2. Part of the phosphoribosylformylglycinamidine synthase complex involved in the purines biosynthetic pathway. Catalyzes the ATP-dependent conversion of formylglycinamide ribonucleotide (FGAR) and glutamine to yield formylglycinamidine ribonucleotide (FGAM) and glutamate. The FGAM synthase complex is composed of three subunits. PurQ produces an ammonia molecule by converting glutamine to glutamate. PurL transfers the ammonia molecule to FGAR to form FGAM in an ATP-dependent manner. PurS interacts with PurQ and PurL and is thought to assist in the transfer of the ammonia molecule from PurQ to PurL. The chain is Phosphoribosylformylglycinamidine synthase subunit PurL from Nitrobacter hamburgensis (strain DSM 10229 / NCIMB 13809 / X14).